A 369-amino-acid polypeptide reads, in one-letter code: GDSL esterase/lipase At5g42170 (369 aa).

The N-terminal stretch at 1 to 16 (MSRLVYVIFLLVVVEG) is a signal peptide. 2 N-linked (GlcNAc...) asparagine glycosylation sites follow: N28 and N45. The Nucleophile role is filled by S57. 2 N-linked (GlcNAc...) asparagine glycosylation sites follow: N203 and N336. Active-site residues include D344 and H347.

The protein belongs to the 'GDSL' lipolytic enzyme family.

The protein resides in the secreted. In Arabidopsis thaliana (Mouse-ear cress), this protein is GDSL esterase/lipase At5g42170.